We begin with the raw amino-acid sequence, 195 residues long: GTP cyclohydrolase 1 (195 aa).

Zn(2+) is bound by residues C86, H89, and C158.

This sequence belongs to the GTP cyclohydrolase I family. In terms of assembly, homomer.

It carries out the reaction GTP + H2O = 7,8-dihydroneopterin 3'-triphosphate + formate + H(+). The protein operates within cofactor biosynthesis; 7,8-dihydroneopterin triphosphate biosynthesis; 7,8-dihydroneopterin triphosphate from GTP: step 1/1. The polypeptide is GTP cyclohydrolase 1 (Ruminiclostridium cellulolyticum (strain ATCC 35319 / DSM 5812 / JCM 6584 / H10) (Clostridium cellulolyticum)).